Here is a 333-residue protein sequence, read N- to C-terminus: Replication factor C subunit 2 (333 aa).

The residue at position 2 (A2) is an N-acetylalanine. 55–62 (GPPGTGKT) is a binding site for ATP.

The protein belongs to the activator 1 small subunits family. As to quaternary structure, heterotetramer of subunits RFC2, RFC3, RFC4 and RFC5 that can form a complex with RFC1.

Its subcellular location is the nucleus. Its function is as follows. May be involved in DNA replication and thus regulate cell proliferation. The chain is Replication factor C subunit 2 (RFC2) from Arabidopsis thaliana (Mouse-ear cress).